Reading from the N-terminus, the 122-residue chain is ATP synthase epsilon chain (122 aa).

Belongs to the ATPase epsilon chain family. F-type ATPases have 2 components, CF(1) - the catalytic core - and CF(0) - the membrane proton channel. CF(1) has five subunits: alpha(3), beta(3), gamma(1), delta(1), epsilon(1). CF(0) has three main subunits: a, b and c.

Its subcellular location is the cell membrane. Its function is as follows. Produces ATP from ADP in the presence of a proton gradient across the membrane. The sequence is that of ATP synthase epsilon chain from Rhodococcus erythropolis (strain PR4 / NBRC 100887).